The sequence spans 145 residues: MKGLLFIVSLLCLTLHQRVWAYQVIGMKSDVICADIRFTVHCICNELGLFPTSRLSKPCPWPNRGRRSADDEDYLFEEDEDDEFFHPRALSPPAAKSGDERLEDEVSFHSRSKRDIAFHEECCNIRTEHKCNKTTVELYCRRYTR.

Positions 1–21 (MKGLLFIVSLLCLTLHQRVWA) are cleaved as a signal peptide. Cystine bridges form between cysteine 33–cysteine 122, cysteine 42–cysteine 59, cysteine 44–cysteine 140, and cysteine 123–cysteine 131. Residues 68–112 (SADDEDYLFEEDEDDEFFHPRALSPPAAKSGDERLEDEVSFHSRS) constitute a propeptide, c peptide. Asparagine 132 carries N-linked (GlcNAc...) asparagine glycosylation.

Androgenic gland.

It localises to the secreted. In terms of biological role, controls sex differentiation and the formation of male appendages, spermatogenesis, pigmentation, and male specific behavior. In Porcellio scaber (Common rough woodlouse), this protein is Androgenic gland hormone (AGH).